Consider the following 518-residue polypeptide: Membrane-bound lytic murein transglycosylase F (518 aa).

An N-terminal signal peptide occupies residues 1–21 (MKKLKINYLFIGILALLLAVA). A non-LT domain region spans residues 22 to 269 (LWPSIPWFGK…RIEEKYLGHG (248 aa)). The segment at 270-518 (DDFDYVDTRT…SRKGSEEKQN (249 aa)) is LT domain. Glu-314 is an active-site residue.

This sequence in the N-terminal section; belongs to the bacterial solute-binding protein 3 family. In the C-terminal section; belongs to the transglycosylase Slt family.

It is found in the cell outer membrane. The enzyme catalyses Exolytic cleavage of the (1-&gt;4)-beta-glycosidic linkage between N-acetylmuramic acid (MurNAc) and N-acetylglucosamine (GlcNAc) residues in peptidoglycan, from either the reducing or the non-reducing ends of the peptidoglycan chains, with concomitant formation of a 1,6-anhydrobond in the MurNAc residue.. In terms of biological role, murein-degrading enzyme that degrades murein glycan strands and insoluble, high-molecular weight murein sacculi, with the concomitant formation of a 1,6-anhydromuramoyl product. Lytic transglycosylases (LTs) play an integral role in the metabolism of the peptidoglycan (PG) sacculus. Their lytic action creates space within the PG sacculus to allow for its expansion as well as for the insertion of various structures such as secretion systems and flagella. In Escherichia coli (strain SMS-3-5 / SECEC), this protein is Membrane-bound lytic murein transglycosylase F.